The following is a 436-amino-acid chain: 3-ketoacyl-CoA thiolase (436 aa).

The Acyl-thioester intermediate role is filled by Cys99. Catalysis depends on proton acceptor residues His392 and Cys422.

The protein belongs to the thiolase-like superfamily. Thiolase family. Heterotetramer of two alpha chains (FadJ) and two beta chains (FadI).

It localises to the cytoplasm. The enzyme catalyses an acyl-CoA + acetyl-CoA = a 3-oxoacyl-CoA + CoA. It functions in the pathway lipid metabolism; fatty acid beta-oxidation. Its function is as follows. Catalyzes the final step of fatty acid oxidation in which acetyl-CoA is released and the CoA ester of a fatty acid two carbons shorter is formed. The polypeptide is 3-ketoacyl-CoA thiolase (Pseudoalteromonas atlantica (strain T6c / ATCC BAA-1087)).